The primary structure comprises 103 residues: MATYAIVKTGGKQYKVAVGDVVKIEKLDFEPGAKVSLPVTLVVDGATVTTNAKALAKVAVTGKVLEHTKGPKIRIHKFKNKTGYHKRQGHRQQLTVLKVTGIK.

Belongs to the bacterial ribosomal protein bL21 family. In terms of assembly, part of the 50S ribosomal subunit. Contacts protein L20.

This protein binds to 23S rRNA in the presence of protein L20. This chain is Large ribosomal subunit protein bL21, found in Mycobacterium leprae (strain Br4923).